A 443-amino-acid polypeptide reads, in one-letter code: Ribulose bisphosphate carboxylase large chain (443 aa).

2 residues coordinate substrate: Asn89 and Thr139. Lys141 functions as the Proton acceptor in the catalytic mechanism. Lys143 provides a ligand contact to substrate. Mg(2+) is bound by residues Lys167, Asp169, and Glu170. Lys167 bears the N6-carboxylysine mark. Catalysis depends on His260, which acts as the Proton acceptor. Substrate-binding residues include Arg261, His293, and Ser345.

It belongs to the RuBisCO large chain family. Type I subfamily. In terms of assembly, heterohexadecamer of 8 large chains and 8 small chains; disulfide-linked. The disulfide link is formed within the large subunit homodimers. Mg(2+) is required as a cofactor. The disulfide bond which can form in the large chain dimeric partners within the hexadecamer appears to be associated with oxidative stress and protein turnover.

It localises to the plastid. Its subcellular location is the chloroplast. It carries out the reaction 2 (2R)-3-phosphoglycerate + 2 H(+) = D-ribulose 1,5-bisphosphate + CO2 + H2O. The catalysed reaction is D-ribulose 1,5-bisphosphate + O2 = 2-phosphoglycolate + (2R)-3-phosphoglycerate + 2 H(+). Functionally, ruBisCO catalyzes two reactions: the carboxylation of D-ribulose 1,5-bisphosphate, the primary event in carbon dioxide fixation, as well as the oxidative fragmentation of the pentose substrate in the photorespiration process. Both reactions occur simultaneously and in competition at the same active site. The sequence is that of Ribulose bisphosphate carboxylase large chain from Sesamum indicum (Oriental sesame).